The following is a 141-amino-acid chain: Lutropin subunit beta (141 aa).

Residues 1–20 (MEMLQGLLLWLLLSMGGARA) form the signal peptide. 6 disulfides stabilise this stretch: Cys-29-Cys-77, Cys-43-Cys-92, Cys-46-Cys-130, Cys-54-Cys-108, Cys-58-Cys-110, and Cys-113-Cys-120. N-linked (GlcNAc...) asparagine glycans are attached at residues Asn-33 and Asn-50.

Belongs to the glycoprotein hormones subunit beta family. Heterodimer of a common alpha chain and a unique beta chain which confers biological specificity to thyrotropin, lutropin, follitropin and gonadotropin.

The protein resides in the secreted. Functionally, promotes spermatogenesis and ovulation by stimulating the testes and ovaries to synthesize steroids. The chain is Lutropin subunit beta (LHB) from Macaca fascicularis (Crab-eating macaque).